The following is a 164-amino-acid chain: Protein-export protein SecB (164 aa).

Belongs to the SecB family. As to quaternary structure, homotetramer, a dimer of dimers. One homotetramer interacts with 1 SecA dimer.

The protein resides in the cytoplasm. Its function is as follows. One of the proteins required for the normal export of preproteins out of the cell cytoplasm. It is a molecular chaperone that binds to a subset of precursor proteins, maintaining them in a translocation-competent state. It also specifically binds to its receptor SecA. This Shewanella denitrificans (strain OS217 / ATCC BAA-1090 / DSM 15013) protein is Protein-export protein SecB.